Here is an 863-residue protein sequence, read N- to C-terminus: Leucine-rich repeat and death domain-containing protein 1 (863 aa).

Disordered stretches follow at residues 1–37 and 51–100; these read MSEKEGMSEELEDTISQFRKESRSQSVKEPGFIKETS and SSNQ…SQSL. A compositionally biased stretch (low complexity) spans 88 to 100; that stretch reads SETSTRTETSQSL. LRR repeat units follow at residues 143 to 166, 167 to 189, 190 to 213, 214 to 236, 238 to 259, 260 to 282, 284 to 305, 306 to 328, 329 to 351, 353 to 374, 375 to 397, 398 to 420, 422 to 443, 445 to 466, 468 to 489, 490 to 513, 515 to 535, 536 to 558, 560 to 581, 582 to 604, 606 to 627, 630 to 653, 654 to 676, 678 to 699, 700 to 722, and 724 to 745; these read CKDNFTVNLEAKGLQEFPKDILKI, KYVKHLYLDKNQIKTFQGADSGD, LLGLEILSLQENGLSSLPSEIQLL, HNLRILNVSHNHISHIPKEISQL, NIRQLFFYNNYIENFPSDLECL, GNLEILSLGKNKLRHIPDTLPSL, YLRVLNLEYNQLTIFPKALCFL, PKLISLDLTGNLISSLPKEIREL, KNLETLLLDHNKLTFLAVEIFQL, KIKELQLADNKLEVISHKIENF, RELRILILDKNLLKNIPEKICCC, AMLECLTLSDNKLTELPKNIHKL, NLRKLHVNRNNMVKITDSISHL, NICSLEFSGNIIAGIPIEIKNC, KIIKIELNYNKIMYFPLGLCAL, DSLYYLSVNGNYISEIPADISFSK, LLHLELSENKLLIFSEHFCSL, INLKYLDLGKNQIKKIPASISNM, SLHVLILCCNKFETFPRELCTL, ENLRVLDLSENQLQKISSDICNL, RIQKLNFSSNQFIHFPIELCQL, LEQLNISQIKGRKLTRLPGELSNM, TQLKELDISNNAIREIPRNIGEL, NLVSLHAYNNQISYIPPSLLSL, NDLQQLNLSGNNLTALPSAIYNL, and SLKEINFDDNPLLRPPMEICKG. A Death domain is found at 767–855; the sequence is EKIFKIVANN…EIMDKITALN (89 aa). An LRR 27 repeat occupies 856 to 863; that stretch reads LFTRAIKF.

In Macaca fascicularis (Crab-eating macaque), this protein is Leucine-rich repeat and death domain-containing protein 1 (LRRD1).